A 91-amino-acid chain; its full sequence is Uteroglobin (91 aa).

Positions 1–21 are cleaved as a signal peptide; sequence MKLTITLALVTLALLCSPASA.

It belongs to the secretoglobin family. In terms of assembly, antiparallel homodimer; disulfide-linked. Interaction with LMBR1L is controversial.

The protein resides in the secreted. Its function is as follows. Uteroglobin binds progesterone specifically and with high affinity. It may regulate progesterone concentrations reaching the blastocyst. It is also a potent inhibitor of phospholipase A2. This Lepus capensis (Brown hare) protein is Uteroglobin (SCGB1A1).